Reading from the N-terminus, the 82-residue chain is Costars family protein v1g158749 (82 aa).

The protein belongs to the costars family.

The protein is Costars family protein v1g158749 of Nematostella vectensis (Starlet sea anemone).